The chain runs to 420 residues: Glucose-1-phosphate adenylyltransferase (420 aa).

Alpha-D-glucose 1-phosphate is bound by residues Tyr107, Gly172, 187-188 (EK), and Ser205.

The protein belongs to the bacterial/plant glucose-1-phosphate adenylyltransferase family. As to quaternary structure, homotetramer.

The catalysed reaction is alpha-D-glucose 1-phosphate + ATP + H(+) = ADP-alpha-D-glucose + diphosphate. Its pathway is glycan biosynthesis; glycogen biosynthesis. Involved in the biosynthesis of ADP-glucose, a building block required for the elongation reactions to produce glycogen. Catalyzes the reaction between ATP and alpha-D-glucose 1-phosphate (G1P) to produce pyrophosphate and ADP-Glc. The protein is Glucose-1-phosphate adenylyltransferase of Rhodopseudomonas palustris (strain BisB18).